The primary structure comprises 217 residues: Large ribosomal subunit protein uL1 (217 aa).

The protein belongs to the universal ribosomal protein uL1 family. In terms of assembly, part of the 50S ribosomal subunit.

In terms of biological role, binds directly to 23S rRNA. Probably involved in E site tRNA release. Protein L1 is also a translational repressor protein, it controls the translation of its operon by binding to its mRNA. This chain is Large ribosomal subunit protein uL1, found in Thermoplasma volcanium (strain ATCC 51530 / DSM 4299 / JCM 9571 / NBRC 15438 / GSS1).